A 467-amino-acid chain; its full sequence is NADH-ubiquinone oxidoreductase chain 4 (467 aa).

The next 13 membrane-spanning stretches (helical) occupy residues 21–40 (SMSK…PTLY), 54–74 (MADV…ISNW), 79–99 (STLY…NFMC), 105–125 (FYMY…LYGA), 135–155 (VLMY…LYEV), 168–188 (LVLS…GIAV), 207–227 (PLAG…FAMI), 239–259 (VTYT…TSII), 266–286 (LKVI…LGML), 297–317 (LVLC…VGGM), 330–350 (FQGL…LSFC), 367–387 (LTGA…SVLL), and 420–440 (VLMI…SWVM).

This sequence belongs to the complex I subunit 4 family.

Its subcellular location is the mitochondrion membrane. The enzyme catalyses a ubiquinone + NADH + 5 H(+)(in) = a ubiquinol + NAD(+) + 4 H(+)(out). Functionally, core subunit of the mitochondrial membrane respiratory chain NADH dehydrogenase (Complex I) that is believed to belong to the minimal assembly required for catalysis. Complex I functions in the transfer of electrons from NADH to the respiratory chain. The immediate electron acceptor for the enzyme is believed to be ubiquinone. The protein is NADH-ubiquinone oxidoreductase chain 4 (ND4) of Debaryomyces hansenii (strain ATCC 36239 / CBS 767 / BCRC 21394 / JCM 1990 / NBRC 0083 / IGC 2968) (Yeast).